Reading from the N-terminus, the 488-residue chain is uncharacterized protein (488 aa).

Ile-27–Ala-38 contacts NAD(+).

This sequence belongs to the mannitol dehydrogenase family. UxuB subfamily.

This is an uncharacterized protein from Escherichia coli (strain K12).